Reading from the N-terminus, the 88-residue chain is UPF0250 protein Shew_2940 (88 aa).

It belongs to the UPF0250 family.

In Shewanella loihica (strain ATCC BAA-1088 / PV-4), this protein is UPF0250 protein Shew_2940.